We begin with the raw amino-acid sequence, 57 residues long: Large ribosomal subunit protein bL32B (57 aa).

This sequence belongs to the bacterial ribosomal protein bL32 family.

The protein is Large ribosomal subunit protein bL32B of Listeria welshimeri serovar 6b (strain ATCC 35897 / DSM 20650 / CCUG 15529 / CIP 8149 / NCTC 11857 / SLCC 5334 / V8).